Consider the following 129-residue polypeptide: Small ribosomal subunit protein uS11 (129 aa).

This sequence belongs to the universal ribosomal protein uS11 family. Part of the 30S ribosomal subunit. Interacts with proteins S7 and S18. Binds to IF-3.

Its function is as follows. Located on the platform of the 30S subunit, it bridges several disparate RNA helices of the 16S rRNA. Forms part of the Shine-Dalgarno cleft in the 70S ribosome. This is Small ribosomal subunit protein uS11 from Methylocella silvestris (strain DSM 15510 / CIP 108128 / LMG 27833 / NCIMB 13906 / BL2).